The following is a 916-amino-acid chain: Chitin synthase B (916 aa).

2 disordered regions span residues 1–75 (MAYH…GYSL) and 118–141 (ARSETSSTEAWRQRQAGAAGGGNG). Positions 14–26 (HTYDDGHQLRDLS) are enriched in basic and acidic residues. Polar residues predominate over residues 59-75 (RGLTASPVQRPTSGYSL). Transmembrane regions (helical) follow at residues 544–561 (RWLNGSFAAGIYSLMHFG), 588–608 (FLTWFSLASYWLTTSVIMDLV), 629–649 (IINTLVKYIYLAFLLLQFILA), 664–684 (SFVAFGIIQLYVVVDALYLVV), 716–736 (IIIIALAATFGLYFVASFMYL), 845–865 (LVTLWLFSNGLLAVCITSEGL), and 884–904 (ALLWSNAVVALIRFIGATWFL).

It belongs to the chitin synthase family. Class III subfamily. In terms of assembly, interacts with kibesin kinA. Activity requires trypsin activation, suggesting a zymogenic nature. In terms of processing, phosphorylated at yet unidentified residues in a N-terminal disordered region-dependent manner.

It localises to the cell membrane. It is found in the cell tip. Its subcellular location is the cell septum. It catalyses the reaction [(1-&gt;4)-N-acetyl-beta-D-glucosaminyl](n) + UDP-N-acetyl-alpha-D-glucosamine = [(1-&gt;4)-N-acetyl-beta-D-glucosaminyl](n+1) + UDP + H(+). Its activity is regulated as follows. Activity is stimulated by Mg(2+) and is inhibited by polyoxin D. Functionally, polymerizes chitin, a structural polymer of the cell wall and septum, by transferring the sugar moiety of UDP-GlcNAc to the non-reducing end of the growing chitin polymer. Does not substantially contribute to the rigidity of the cell wall but is necessary for normal hyphal growth and organization. In addition to its functions in the formation of normal cell walls of hyphae, is also involved in conidiophore and conidia development. This chain is Chitin synthase B, found in Emericella nidulans (strain FGSC A4 / ATCC 38163 / CBS 112.46 / NRRL 194 / M139) (Aspergillus nidulans).